The primary structure comprises 137 residues: Actin-depolymerizing factor 12 (137 aa).

Ser-6 carries the post-translational modification Phosphoserine. The ADF-H domain occupies 7 to 137 (GMAVEDECKL…SLDIIKSRAL (131 aa)).

Belongs to the actin-binding proteins ADF family. As to expression, specifically expressed in pollen.

The protein resides in the cytoplasm. Its subcellular location is the cytoskeleton. Actin-depolymerizing protein. Severs actin filaments (F-actin) and binds to actin monomers. The sequence is that of Actin-depolymerizing factor 12 from Arabidopsis thaliana (Mouse-ear cress).